A 76-amino-acid polypeptide reads, in one-letter code: Toxin Acra III-2 (76 aa).

Residues 3-67 enclose the LCN-type CS-alpha/beta domain; that stretch reads VPGNYPLNTY…IWDAVKNHCT (65 aa). 3 disulfides stabilise this stretch: C18–C41, C27–C46, and C31–C48.

It belongs to the long (3 C-C) scorpion toxin superfamily. Sodium channel inhibitor family. Beta subfamily. Expressed by the venom gland.

Its subcellular location is the secreted. In terms of biological role, binds to sodium channels (Nav) and affects the channel activation process. This chain is Toxin Acra III-2, found in Androctonus crassicauda (Arabian fat-tailed scorpion).